A 201-amino-acid polypeptide reads, in one-letter code: Natural cytotoxicity triggering receptor 3 (201 aa).

The signal sequence occupies residues 1 to 18 (MAWMLLLILIMVHPGSCA). The Ig-like domain occupies 19–126 (LWVSQPPEIR…VGTGNGTRLV (108 aa)). The Extracellular segment spans residues 19 to 135 (LWVSQPPEIR…VVEKEHPQLG (117 aa)). A disulfide bridge connects residues cysteine 39 and cysteine 108. N-linked (GlcNAc...) asparagine glycosylation is found at asparagine 42 and asparagine 121. A helical membrane pass occupies residues 136-156 (AGTVLLLRAGFYAVSFLSVAV). At 157–201 (GSTVYYQGKCLTWKGPRRQLPAVVPAPLPPPCGSSAHLLPPVPGG) the chain is on the cytoplasmic side.

Belongs to the natural cytotoxicity receptor (NCR) family. In terms of assembly, homodimer in the unliganted form. Interacts with CD3Z. Interacts with and is activated by binding to NCR3LG1. Interacts with and is activated by binding to BAG6. Interacts with and is inhibited by binding to LGALS3. Selectively expressed by all resting and activated NK cells and weakly expressed in spleen.

The protein resides in the cell membrane. Functionally, cell membrane receptor of natural killer/NK cells that is activated by binding of extracellular ligands including BAG6 and NCR3LG1. Stimulates NK cells cytotoxicity toward neighboring cells producing these ligands. It controls, for instance, NK cells cytotoxicity against tumor cells. Engagement of NCR3 by BAG6 also promotes myeloid dendritic cells (DC) maturation, both through killing DCs that did not acquire a mature phenotype, and inducing the release by NK cells of TNFA and IFNG which promote DC maturation. This Homo sapiens (Human) protein is Natural cytotoxicity triggering receptor 3.